A 658-amino-acid polypeptide reads, in one-letter code: Translation factor GUF1, mitochondrial (658 aa).

Residues 1 to 40 (MRGCLQTVRWLTSAWQRPPSYPPLSRAAPCRFFNVSIPRN) constitute a mitochondrion transit peptide. Residues 60 to 240 (DRFRNFCIVA…TVVEQIPAPV (181 aa)) form the tr-type G domain. GTP is bound by residues 69-76 (AHVDHGKS), 133-137 (DTPGH), and 187-190 (NKVD).

The protein belongs to the TRAFAC class translation factor GTPase superfamily. Classic translation factor GTPase family. LepA subfamily.

The protein resides in the mitochondrion inner membrane. The catalysed reaction is GTP + H2O = GDP + phosphate + H(+). Functionally, promotes mitochondrial protein synthesis. May act as a fidelity factor of the translation reaction, by catalyzing a one-codon backward translocation of tRNAs on improperly translocated ribosomes. Binds to mitochondrial ribosomes in a GTP-dependent manner. The polypeptide is Translation factor GUF1, mitochondrial (Paracoccidioides brasiliensis (strain Pb03)).